A 103-amino-acid polypeptide reads, in one-letter code: Pyrimidine/purine nucleoside phosphorylase (103 aa).

It belongs to the nucleoside phosphorylase PpnP family.

The enzyme catalyses a purine D-ribonucleoside + phosphate = a purine nucleobase + alpha-D-ribose 1-phosphate. It carries out the reaction adenosine + phosphate = alpha-D-ribose 1-phosphate + adenine. It catalyses the reaction cytidine + phosphate = cytosine + alpha-D-ribose 1-phosphate. The catalysed reaction is guanosine + phosphate = alpha-D-ribose 1-phosphate + guanine. The enzyme catalyses inosine + phosphate = alpha-D-ribose 1-phosphate + hypoxanthine. It carries out the reaction thymidine + phosphate = 2-deoxy-alpha-D-ribose 1-phosphate + thymine. It catalyses the reaction uridine + phosphate = alpha-D-ribose 1-phosphate + uracil. The catalysed reaction is xanthosine + phosphate = alpha-D-ribose 1-phosphate + xanthine. In terms of biological role, catalyzes the phosphorolysis of diverse nucleosides, yielding D-ribose 1-phosphate and the respective free bases. Can use uridine, adenosine, guanosine, cytidine, thymidine, inosine and xanthosine as substrates. Also catalyzes the reverse reactions. The polypeptide is Pyrimidine/purine nucleoside phosphorylase (Shewanella putrefaciens (strain CN-32 / ATCC BAA-453)).